The following is a 507-amino-acid chain: Proton-coupled zinc antiporter SLC30A1 (507 aa).

Residues 1–10 are Cytoplasmic-facing; the sequence is MGCWGRNRGR. The helical transmembrane segment at 11–31 threads the bilayer; that stretch reads LLCMLLLTFMFMVLEVVVSRV. Over 32–35 the chain is Extracellular; sequence TASL. A helical membrane pass occupies residues 36–56; sequence AMLSDSFHMLSDVLALVVALV. Zn(2+) contacts are provided by His43 and Asp47. Topologically, residues 57 to 78 are cytoplasmic; the sequence is AERFARRTHATQKNTFGWIRAE. The chain crosses the membrane as a helical span at residues 79 to 99; the sequence is VMGALVNAIFLTGLCFAILLE. Residues 100 to 113 lie on the Extracellular side of the membrane; that stretch reads AVERFIEPHEMQQP. The helical transmembrane segment at 114–134 threads the bilayer; that stretch reads LVVLSVGVAGLLVNVLGLCLF. At 135–247 the chain is on the cytoplasmic side; the sequence is HHHSGEGQGA…RAGQLNMRGV (113 aa). The tract at residues 140 to 218 is disordered; the sequence is EGQGAGHGHS…EKLRSDDPVD (79 aa). The segment at 145–156 is 6 X 2 AA approximate repeats of H-G; sequence GHGHSHGHGHGH. Positions 147–165 are enriched in basic residues; that stretch reads GHSHGHGHGHLAKGARKAG. Positions 188-200 are enriched in polar residues; it reads TNTLVANTSNSNG. Residues 204–215 are compositionally biased toward basic and acidic residues; it reads DQAEPEKLRSDD. Residues 248–268 traverse the membrane as a helical segment; that stretch reads FLHVLGDALGSVIVVVNALVF. 2 residues coordinate Zn(2+): His250 and Asp254. Residues 269 to 307 are Extracellular-facing; it reads YFSWKGCTEDDFCVNPCFPDPCKSSVELMNSTQAPMHEA. Asn298 carries N-linked (GlcNAc...) asparagine glycosylation. Residues 308–328 traverse the membrane as a helical segment; it reads GPCWVLYLDPTLCIIMVCILL. At 329–507 the chain is on the cytoplasmic side; that stretch reads YTTYPLLKES…VPNKQPESSL (179 aa). Ser506 carries the post-translational modification Phosphoserine.

This sequence belongs to the cation diffusion facilitator (CDF) transporter (TC 2.A.4) family. SLC30A subfamily. As to quaternary structure, homodimer. Interacts with TMEM163. Interacts and forms a complex with TMC6 and TMC8; the interaction regulates zinc transport into the ER. In terms of tissue distribution, widely expressed. Detected in duodenum and jejunum but not in ileum and colon (at protein level). Expressed by neuroglial cells (at protein level).

It is found in the cell membrane. The protein resides in the basolateral cell membrane. Its subcellular location is the cytoplasmic vesicle membrane. The protein localises to the cytoplasm. It localises to the endoplasmic reticulum membrane. It is found in the golgi apparatus membrane. The protein resides in the nucleus membrane. The enzyme catalyses Zn(2+)(in) + 2 H(+)(out) = Zn(2+)(out) + 2 H(+)(in). With respect to regulation, calcium-dependent. Functionally, zinc ion:proton antiporter that could function at the plasma membrane mediating zinc efflux from cells against its electrochemical gradient protecting them from intracellular zinc accumulation and toxicity. Alternatively, could prevent the transport to the plasma membrane of CACNB2, the L-type calcium channels regulatory subunit, through a yet to be defined mechanism. By modulating the expression of these channels at the plasma membrane, could prevent calcium and zinc influx into cells. By the same mechanism, could also prevent L-type calcium channels-mediated heavy metal influx into cells. In some cells, could also function as a zinc ion:proton antiporter mediating zinc entry into the lumen of cytoplasmic vesicles. In macrophages, can increase zinc ions concentration into the lumen of cytoplasmic vesicles containing engulfed bacteria and could help inactivate them. Forms a complex with TMC6/EVER1 and TMC8/EVER2 at the ER membrane of keratynocytes which facilitates zinc uptake into the ER. Down-regulates the activity of transcription factors induced by zinc and cytokines. This Rattus norvegicus (Rat) protein is Proton-coupled zinc antiporter SLC30A1.